The chain runs to 211 residues: Arginine exporter protein ArgO (211 aa).

The next 6 membrane-spanning stretches (helical) occupy residues 1-21, 37-57, 68-88, 111-131, 147-167, and 179-199; these read MFTYYFQGLALGAAMILPLGP, LMIALLCAVSDLLLICAGIFG, LLALVTWGGVAFLLCYGFGAL, IIITMLAVTWLNPHVYLDTFV, WFALGTISASFLWFFGLALLA, and AQRIINIVVGAVMWFIAFQLA.

Belongs to the LysE/ArgO transporter (TC 2.A.75) family.

It localises to the cell inner membrane. The catalysed reaction is L-arginine(in) = L-arginine(out). In terms of biological role, involved in the export of arginine. Important to control the intracellular level of arginine and the correct balance between arginine and lysine. The protein is Arginine exporter protein ArgO of Klebsiella pneumoniae subsp. pneumoniae (strain ATCC 700721 / MGH 78578).